The following is a 403-amino-acid chain: CinA-like protein (403 aa).

This sequence belongs to the CinA family.

This is CinA-like protein from Petrotoga mobilis (strain DSM 10674 / SJ95).